Here is a 448-residue protein sequence, read N- to C-terminus: Chaperone SurA (448 aa).

Positions 1–27 (MKKTLRFAAVAAGLVASLITVAPSASA) are cleaved as a signal peptide. 2 consecutive PpiC domains span residues 185–288 (QQDL…RLVD) and 301–399 (IVQT…QVLG). The segment at 230–249 (LAKSQSEADDAKKGGDLGFK) is disordered.

The protein resides in the periplasm. It catalyses the reaction [protein]-peptidylproline (omega=180) = [protein]-peptidylproline (omega=0). In terms of biological role, chaperone involved in the correct folding and assembly of outer membrane proteins. Recognizes specific patterns of aromatic residues and the orientation of their side chains, which are found more frequently in integral outer membrane proteins. May act in both early periplasmic and late outer membrane-associated steps of protein maturation. This Burkholderia thailandensis (strain ATCC 700388 / DSM 13276 / CCUG 48851 / CIP 106301 / E264) protein is Chaperone SurA.